The following is a 149-amino-acid chain: Large ribosomal subunit protein bL9 (149 aa).

This sequence belongs to the bacterial ribosomal protein bL9 family.

Its function is as follows. Binds to the 23S rRNA. The polypeptide is Large ribosomal subunit protein bL9 (Geobacillus kaustophilus (strain HTA426)).